The primary structure comprises 734 residues: Regulator of G-protein signaling rgs-6 (734 aa).

The disordered stretch occupies residues 1–24; it reads MSTPCSGNEPATPTNTSPNNETSN. The segment covering 8 to 24 has biased composition (low complexity); that stretch reads NEPATPTNTSPNNETSN. The region spanning 46 to 157 is the RGS domain; it reads IFKKVIRDPV…YDCWPRFLRS (112 aa). 3 disordered regions span residues 162-236, 489-515, and 538-734; these read QPSF…SPTH, HAVS…YSPA, and VNAG…AAYV. Over residues 166 to 176 the composition is skewed to acidic residues; the sequence is TDEELAADDED. Positions 180–191 are enriched in polar residues; it reads HSQPTSLNNTNE. A compositionally biased stretch (low complexity) spans 194–208; the sequence is AAAQQSQPAPNAPAA. Polar residues-rich tracts occupy residues 494-506 and 538-557; these read SDPN…SQDR and VNAG…SKNR. Composition is skewed to basic and acidic residues over residues 563 to 585 and 606 to 619; these read SKTE…RSDD and TTEE…KSGD. Over residues 642–694 the composition is skewed to low complexity; the sequence is AAAAAAGASPSTSAPSTSTSVQTKTTTSPTKSPTSTTITTSGTTTSATSSVAT. 2 stretches are compositionally biased toward polar residues: residues 705-715 and 724-734; these read SASTPATSSQL and RESSWQTAAYV.

This is Regulator of G-protein signaling rgs-6 from Caenorhabditis elegans.